The chain runs to 431 residues: Enolase (431 aa).

(2R)-2-phosphoglycerate is bound at residue Gln-166. The active-site Proton donor is Glu-208. Mg(2+)-binding residues include Asp-245, Glu-288, and Asp-315. Positions 340, 369, 370, and 391 each coordinate (2R)-2-phosphoglycerate. Catalysis depends on Lys-340, which acts as the Proton acceptor.

Belongs to the enolase family. Mg(2+) is required as a cofactor.

Its subcellular location is the cytoplasm. It localises to the secreted. The protein localises to the cell surface. The catalysed reaction is (2R)-2-phosphoglycerate = phosphoenolpyruvate + H2O. Its pathway is carbohydrate degradation; glycolysis; pyruvate from D-glyceraldehyde 3-phosphate: step 4/5. Catalyzes the reversible conversion of 2-phosphoglycerate (2-PG) into phosphoenolpyruvate (PEP). It is essential for the degradation of carbohydrates via glycolysis. The sequence is that of Enolase from Clostridium botulinum (strain ATCC 19397 / Type A).